Reading from the N-terminus, the 874-residue chain is Alanine--tRNA ligase (874 aa).

Positions 563, 567, 665, and 669 each coordinate Zn(2+).

This sequence belongs to the class-II aminoacyl-tRNA synthetase family. The cofactor is Zn(2+).

Its subcellular location is the cytoplasm. The catalysed reaction is tRNA(Ala) + L-alanine + ATP = L-alanyl-tRNA(Ala) + AMP + diphosphate. In terms of biological role, catalyzes the attachment of alanine to tRNA(Ala) in a two-step reaction: alanine is first activated by ATP to form Ala-AMP and then transferred to the acceptor end of tRNA(Ala). Also edits incorrectly charged Ser-tRNA(Ala) and Gly-tRNA(Ala) via its editing domain. The chain is Alanine--tRNA ligase from Actinobacillus succinogenes (strain ATCC 55618 / DSM 22257 / CCUG 43843 / 130Z).